A 3092-amino-acid chain; its full sequence is Probable polyketide synthase 45 (3092 aa).

Residues 10 to 430 (DNDVAIIGIG…GSNVCLILTE (421 aa)) form the Ketosynthase family 3 (KS3) domain. Catalysis depends on for beta-ketoacyl synthase activity residues cysteine 170, histidine 315, and histidine 353. An acyl/malonyl transferase region spans residues 640 to 673 (GILASISIGHSLGEVSSAVCSGMIDLETGCFIIY). Serine 650 (for acyl/malonyl transferase activity) is an active-site residue. The N-terminal hotdog fold stretch occupies residues 967–1087 (INQLGNRNER…GKFSITKHND (121 aa)). The 288-residue stretch at 967–1254 (INQLGNRNER…YTQLTPYKNQ (288 aa)) folds into the PKS/mFAS DH domain. The active-site Proton acceptor; for dehydratase activity is histidine 999. The interval 1103–1254 (NFVTIQKKEL…YTQLTPYKNQ (152 aa)) is C-terminal hotdog fold. Aspartate 1165 acts as the Proton donor; for dehydratase activity in catalysis. The Carrier domain occupies 2566–2644 (SDDLSIREEI…QLIQSVTDAM (79 aa)). Serine 2604 carries the O-(pantetheine 4'-phosphoryl)serine modification. Residues 2705 to 2725 (NTVFLTGSSGFIGIYILFYLI) form a helical membrane-spanning segment.

Pantetheine 4'-phosphate is required as a cofactor.

It is found in the membrane. Functionally, probable polyketide synthase. This chain is Probable polyketide synthase 45 (pks45), found in Dictyostelium discoideum (Social amoeba).